The primary structure comprises 419 residues: D-amino acid dehydrogenase (419 aa).

3–17 (VIVLGSGVIGVASAY) contributes to the FAD binding site.

This sequence belongs to the DadA oxidoreductase family. The cofactor is FAD.

The enzyme catalyses a D-alpha-amino acid + A + H2O = a 2-oxocarboxylate + AH2 + NH4(+). It functions in the pathway amino-acid degradation; D-alanine degradation; NH(3) and pyruvate from D-alanine: step 1/1. In terms of biological role, oxidative deamination of D-amino acids. The chain is D-amino acid dehydrogenase from Acinetobacter baylyi (strain ATCC 33305 / BD413 / ADP1).